Here is a 299-residue protein sequence, read N- to C-terminus: Acetylglutamate kinase (299 aa).

Residues G72–G73, R94, and N196 contribute to the substrate site.

This sequence belongs to the acetylglutamate kinase family. ArgB subfamily.

The protein localises to the cytoplasm. It catalyses the reaction N-acetyl-L-glutamate + ATP = N-acetyl-L-glutamyl 5-phosphate + ADP. Its pathway is amino-acid biosynthesis; L-arginine biosynthesis; N(2)-acetyl-L-ornithine from L-glutamate: step 2/4. Functionally, catalyzes the ATP-dependent phosphorylation of N-acetyl-L-glutamate. In Burkholderia ambifaria (strain MC40-6), this protein is Acetylglutamate kinase.